A 298-amino-acid chain; its full sequence is ATP synthase F(1) complex subunit gamma, mitochondrial (298 aa).

A mitochondrion-targeting transit peptide spans 1–25; it reads MFSRAGVAGLSAWTLQPQWIQVRNM. Lys-39 carries the post-translational modification N6-acetyllysine. Residue Lys-49 is modified to N6-succinyllysine. Residue Lys-55 is modified to N6-acetyllysine. Lys-115 carries the N6-acetyllysine; alternate modification. Lys-115 carries the N6-succinyllysine; alternate modification. Ser-146 is modified (phosphoserine). N6-acetyllysine; alternate is present on Lys-154. N6-succinyllysine; alternate is present on Lys-154. At Lys-197 the chain carries N6-acetyllysine. At Lys-270 the chain carries N6-succinyllysine.

Belongs to the ATPase gamma chain family. As to quaternary structure, component of the ATP synthase complex composed at least of ATP5F1A/subunit alpha, ATP5F1B/subunit beta, ATP5MC1/subunit c (homooctomer), MT-ATP6/subunit a, MT-ATP8/subunit 8, ATP5ME/subunit e, ATP5MF/subunit f, ATP5MG/subunit g, ATP5MK/subunit k, ATP5MJ/subunit j, ATP5F1C/subunit gamma, ATP5F1D/subunit delta, ATP5F1E/subunit epsilon, ATP5PF/subunit F6, ATP5PB/subunit b, ATP5PD/subunit d, ATP5PO/subunit OSCP. ATP synthase complex consists of a soluble F(1) head domain (subunits alpha(3) and beta(3)) - the catalytic core - and a membrane F(0) domain - the membrane proton channel (subunits c, a, 8, e, f, g, k and j). These two domains are linked by a central stalk (subunits gamma, delta, and epsilon) rotating inside the F1 region and a stationary peripheral stalk (subunits F6, b, d, and OSCP). Interacts with FLVCR2; this interaction occurs in the absence of heme and is disrupted upon heme binding.

Its subcellular location is the mitochondrion inner membrane. In terms of biological role, subunit gamma, of the mitochondrial membrane ATP synthase complex (F(1)F(0) ATP synthase or Complex V) that produces ATP from ADP in the presence of a proton gradient across the membrane which is generated by electron transport complexes of the respiratory chain. ATP synthase complex consist of a soluble F(1) head domain - the catalytic core - and a membrane F(1) domain - the membrane proton channel. These two domains are linked by a central stalk rotating inside the F(1) region and a stationary peripheral stalk. During catalysis, ATP synthesis in the catalytic domain of F(1) is coupled via a rotary mechanism of the central stalk subunits to proton translocation. In vivo, can only synthesize ATP although its ATP hydrolase activity can be activated artificially in vitro. With the central stalk subunit delta, is essential for the biogenesis of F(1) catalytic part of the ATP synthase complex namely in the formation of F1 assembly intermediate. The sequence is that of ATP synthase F(1) complex subunit gamma, mitochondrial from Macaca fascicularis (Crab-eating macaque).